The sequence spans 53 residues: Conotoxin Cal6.27 (53 aa).

Positions Met1–Ala24 are cleaved as a signal peptide. Cystine bridges form between Cys29–Cys43, Cys36–Cys47, and Cys42–Cys51.

This sequence belongs to the conotoxin O1 superfamily. As to expression, expressed by the venom duct.

It localises to the secreted. Functionally, probable neurotoxin. This Californiconus californicus (California cone) protein is Conotoxin Cal6.27.